A 351-amino-acid chain; its full sequence is Glycerol-3-phosphate dehydrogenase 1-like protein (351 aa).

G12 to G17 is an NAD(+) binding site. Position 122 (K122) interacts with substrate. An NAD(+)-binding site is contributed by A155. K206 (proton acceptor) is an active-site residue. Residues R271, K298, and Q300 each coordinate NAD(+). Residue R271–N272 coordinates substrate.

This sequence belongs to the NAD-dependent glycerol-3-phosphate dehydrogenase family. As to quaternary structure, interacts with SCN5A.

It localises to the cytoplasm. It catalyses the reaction sn-glycerol 3-phosphate + NAD(+) = dihydroxyacetone phosphate + NADH + H(+). Its function is as follows. Plays a role in regulating cardiac sodium current; decreased enzymatic activity with resulting increased levels of glycerol 3-phosphate activating the DPD1L-dependent SCN5A phosphorylation pathway, may ultimately lead to decreased sodium current; cardiac sodium current may also be reduced due to alterations of NAD(H) balance induced by DPD1L. The sequence is that of Glycerol-3-phosphate dehydrogenase 1-like protein (Gpd1l) from Mus musculus (Mouse).